Here is a 104-residue protein sequence, read N- to C-terminus: UPF0145 protein STH1265 (104 aa).

This sequence belongs to the UPF0145 family.

The polypeptide is UPF0145 protein STH1265 (Symbiobacterium thermophilum (strain DSM 24528 / JCM 14929 / IAM 14863 / T)).